The primary structure comprises 397 residues: Phosphoglycerate kinase (397 aa).

Residues 22-24 (DLN), Arg-37, 60-63 (HFGR), Arg-119, and Arg-152 each bind substrate. ATP-binding positions include Lys-202, Glu-324, and 354–357 (GGDT).

This sequence belongs to the phosphoglycerate kinase family. Monomer.

The protein resides in the cytoplasm. The catalysed reaction is (2R)-3-phosphoglycerate + ATP = (2R)-3-phospho-glyceroyl phosphate + ADP. Its pathway is carbohydrate degradation; glycolysis; pyruvate from D-glyceraldehyde 3-phosphate: step 2/5. The protein is Phosphoglycerate kinase of Rhizorhabdus wittichii (strain DSM 6014 / CCUG 31198 / JCM 15750 / NBRC 105917 / EY 4224 / RW1) (Sphingomonas wittichii).